Consider the following 508-residue polypeptide: Photosystem II CP47 reaction center protein (508 aa).

A run of 6 helical transmembrane segments spans residues Ser-21–Ser-36, Ile-101–Trp-115, Gly-140–Phe-156, Ile-203–Ser-218, Val-237–Val-252, and Ser-457–Arg-472.

Belongs to the PsbB/PsbC family. PsbB subfamily. PSII is composed of 1 copy each of membrane proteins PsbA, PsbB, PsbC, PsbD, PsbE, PsbF, PsbH, PsbI, PsbJ, PsbK, PsbL, PsbM, PsbT, PsbX, PsbY, PsbZ, Psb30/Ycf12, at least 3 peripheral proteins of the oxygen-evolving complex and a large number of cofactors. It forms dimeric complexes. The cofactor is Binds multiple chlorophylls. PSII binds additional chlorophylls, carotenoids and specific lipids..

The protein localises to the plastid. Its subcellular location is the chloroplast thylakoid membrane. Functionally, one of the components of the core complex of photosystem II (PSII). It binds chlorophyll and helps catalyze the primary light-induced photochemical processes of PSII. PSII is a light-driven water:plastoquinone oxidoreductase, using light energy to abstract electrons from H(2)O, generating O(2) and a proton gradient subsequently used for ATP formation. This Nymphaea alba (White water-lily) protein is Photosystem II CP47 reaction center protein.